The sequence spans 208 residues: Protein-L-isoaspartate O-methyltransferase (208 aa).

Ser-59 is a catalytic residue.

This sequence belongs to the methyltransferase superfamily. L-isoaspartyl/D-aspartyl protein methyltransferase family.

The protein resides in the cytoplasm. It catalyses the reaction [protein]-L-isoaspartate + S-adenosyl-L-methionine = [protein]-L-isoaspartate alpha-methyl ester + S-adenosyl-L-homocysteine. Its function is as follows. Catalyzes the methyl esterification of L-isoaspartyl residues in peptides and proteins that result from spontaneous decomposition of normal L-aspartyl and L-asparaginyl residues. It plays a role in the repair and/or degradation of damaged proteins. The polypeptide is Protein-L-isoaspartate O-methyltransferase (Salmonella paratyphi A (strain ATCC 9150 / SARB42)).